Here is a 734-residue protein sequence, read N- to C-terminus: Photosystem I P700 chlorophyll a apoprotein A2 (734 aa).

8 helical membrane passes run 46–69, 135–158, 175–199, 273–291, 330–353, 369–395, 417–439, and 517–535; these read IFAS…FHVA, LYTG…LHLQ, LNHH…HVAI, MAHH…GHMY, LHFQ…QHMY, AALY…IFFI, AIIS…LYVH, and FLVH…LILV. Positions 559 and 568 each coordinate [4Fe-4S] cluster. Helical transmembrane passes span 575–596 and 643–665; these read AFYL…YWHW and LSVW…MFLI. Chlorophyll a contacts are provided by H654, M662, and Y670. W671 contributes to the phylloquinone binding site. A helical membrane pass occupies residues 707–727; it reads LVGLAHFSVGYIFTYAAFLIA.

It belongs to the PsaA/PsaB family. As to quaternary structure, the PsaA/B heterodimer binds the P700 chlorophyll special pair and subsequent electron acceptors. PSI consists of a core antenna complex that captures photons, and an electron transfer chain that converts photonic excitation into a charge separation. The eukaryotic PSI reaction center is composed of at least 11 subunits. P700 is a chlorophyll a/chlorophyll a' dimer, A0 is one or more chlorophyll a, A1 is one or both phylloquinones and FX is a shared 4Fe-4S iron-sulfur center. is required as a cofactor.

It localises to the plastid. It is found in the chloroplast thylakoid membrane. The enzyme catalyses reduced [plastocyanin] + hnu + oxidized [2Fe-2S]-[ferredoxin] = oxidized [plastocyanin] + reduced [2Fe-2S]-[ferredoxin]. Functionally, psaA and PsaB bind P700, the primary electron donor of photosystem I (PSI), as well as the electron acceptors A0, A1 and FX. PSI is a plastocyanin-ferredoxin oxidoreductase, converting photonic excitation into a charge separation, which transfers an electron from the donor P700 chlorophyll pair to the spectroscopically characterized acceptors A0, A1, FX, FA and FB in turn. Oxidized P700 is reduced on the lumenal side of the thylakoid membrane by plastocyanin. The chain is Photosystem I P700 chlorophyll a apoprotein A2 from Lactuca sativa (Garden lettuce).